Consider the following 703-residue polypeptide: Prolyl 3-hydroxylase 2 (703 aa).

The first 21 residues, 1–21 (MRESTWVSLLLLLLLPTPQRG), serve as a signal peptide directing secretion. Residues 17-40 (TPQRGGPQDGRRSPEPEPERGPLQ) form a disordered region. Residues 25–36 (DGRRSPEPEPER) show a composition bias toward basic and acidic residues. TPR repeat units follow at residues 42 to 75 (FDLL…HRRL), 144 to 177 (RVPY…NPEH), 205 to 238 (HLES…YFNE), and 301 to 334 (PLHY…HPDN). Asn444 and Asn544 each carry an N-linked (GlcNAc...) asparagine glycan. In terms of domain architecture, Fe2OG dioxygenase spans 552–666 (THMVCRTALS…RCAVALWFTL (115 aa)). The Fe cation site is built by His575, Asp577, and His647. The active site involves Arg657. The Prevents secretion from ER signature appears at 700 to 703 (KDEL).

Belongs to the leprecan family. Fe cation is required as a cofactor. Requires L-ascorbate as cofactor. In terms of tissue distribution, detected in kidney. Detected on kidney tubular cells, pancreas acinar cells, Schwann cells of the peripheral nerve in the pinna, and in tunica adventitia, the smooth muscle layer of the aortic wall (at protein level). Detected in lung, skeletal muscle and kidney. Detected in kidney glomeruli and in prehypertrophic regions of long bone from neonates. In the eye, detected in the epithelial layer of the cornea and at lower levels in the sclera at the posterior end of the eye.

The protein localises to the endoplasmic reticulum. The protein resides in the sarcoplasmic reticulum. It localises to the golgi apparatus. It carries out the reaction L-prolyl-[collagen] + 2-oxoglutarate + O2 = trans-3-hydroxy-L-prolyl-[collagen] + succinate + CO2. Prolyl 3-hydroxylase that catalyzes the post-translational formation of 3-hydroxyproline on collagens. Contributes to proline 3-hydroxylation of collagen COL4A1 and COL1A1 in tendons, the eye sclera and in the eye lens capsule. Has high activity with the type IV collagen COL4A1, and lower activity with COL1A1. Catalyzes hydroxylation of the first Pro in Gly-Pro-Hyp sequences where Hyp is 4-hydroxyproline. Has no activity on substrates that have proline instead of 4-hydroxyproline in the third position. In Mus musculus (Mouse), this protein is Prolyl 3-hydroxylase 2.